The chain runs to 272 residues: Putative phosphoenolpyruvate synthase regulatory protein (272 aa).

152 to 159 serves as a coordination point for ADP; the sequence is GVSRSGKT.

This sequence belongs to the pyruvate, phosphate/water dikinase regulatory protein family. PSRP subfamily.

It carries out the reaction [pyruvate, water dikinase] + ADP = [pyruvate, water dikinase]-phosphate + AMP + H(+). The catalysed reaction is [pyruvate, water dikinase]-phosphate + phosphate + H(+) = [pyruvate, water dikinase] + diphosphate. Bifunctional serine/threonine kinase and phosphorylase involved in the regulation of the phosphoenolpyruvate synthase (PEPS) by catalyzing its phosphorylation/dephosphorylation. This chain is Putative phosphoenolpyruvate synthase regulatory protein, found in Hahella chejuensis (strain KCTC 2396).